We begin with the raw amino-acid sequence, 701 residues long: Polyribonucleotide nucleotidyltransferase (701 aa).

Residues Asp-487 and Asp-493 each contribute to the Mg(2+) site. The KH domain maps to Pro-554–Ile-613. One can recognise an S1 motif domain in the interval Gly-623–Lys-691.

It belongs to the polyribonucleotide nucleotidyltransferase family. In terms of assembly, component of the RNA degradosome, which is a multiprotein complex involved in RNA processing and mRNA degradation. Mg(2+) serves as cofactor.

The protein resides in the cytoplasm. The catalysed reaction is RNA(n+1) + phosphate = RNA(n) + a ribonucleoside 5'-diphosphate. Functionally, involved in mRNA degradation. Catalyzes the phosphorolysis of single-stranded polyribonucleotides processively in the 3'- to 5'-direction. In Pseudomonas putida (strain ATCC 47054 / DSM 6125 / CFBP 8728 / NCIMB 11950 / KT2440), this protein is Polyribonucleotide nucleotidyltransferase.